The chain runs to 216 residues: uncharacterized protein (216 aa).

Over residues 182–193 the composition is skewed to polar residues; sequence STSNASVNSDDA. The interval 182–204 is disordered; it reads STSNASVNSDDASTAELGPTSEE.

This is an uncharacterized protein from Caenorhabditis elegans.